Consider the following 264-residue polypeptide: 2-C-methyl-D-erythritol 4-phosphate cytidylyltransferase (264 aa).

The tract at residues 234–264 is disordered; the sequence is ARDPESAHPQSSVLASAFSGPGSRVSGPEEI.

This sequence belongs to the IspD/TarI cytidylyltransferase family. IspD subfamily.

The catalysed reaction is 2-C-methyl-D-erythritol 4-phosphate + CTP + H(+) = 4-CDP-2-C-methyl-D-erythritol + diphosphate. Its pathway is isoprenoid biosynthesis; isopentenyl diphosphate biosynthesis via DXP pathway; isopentenyl diphosphate from 1-deoxy-D-xylulose 5-phosphate: step 2/6. In terms of biological role, catalyzes the formation of 4-diphosphocytidyl-2-C-methyl-D-erythritol from CTP and 2-C-methyl-D-erythritol 4-phosphate (MEP). The sequence is that of 2-C-methyl-D-erythritol 4-phosphate cytidylyltransferase from Xanthomonas euvesicatoria pv. vesicatoria (strain 85-10) (Xanthomonas campestris pv. vesicatoria).